The chain runs to 91 residues: MFGLGGAAPQISSQQKLQAAEAELDMVTGMFNQLVEQCHSKCINKTYNDSEVSKQEALCLDRCVAKYFETNVQVGEHMQKMGQSGQFMGRQ.

The Twin CX3C motif motif lies at 38–63; sequence CHSKCINKTYNDSEVSKQEALCLDRC. 2 cysteine pairs are disulfide-bonded: C38–C63 and C42–C59.

This sequence belongs to the small Tim family. As to quaternary structure, heterohexamer; composed of 3 copies of TIM9 and 3 copies of TIM10, named soluble 70 kDa complex. Associates directly with the TIM22 complex, whose core is composed of TIM22 and TIM54. Interacts with the transmembrane regions of multi-pass transmembrane proteins in transit.

The protein localises to the mitochondrion inner membrane. Its function is as follows. Mitochondrial intermembrane chaperone that participates in the import and insertion of multi-pass transmembrane proteins into the mitochondrial inner membrane. Also required for the transfer of beta-barrel precursors from the TOM complex to the sorting and assembly machinery (SAM complex) of the outer membrane. Acts as a chaperone-like protein that protects the hydrophobic precursors from aggregation and guide them through the mitochondrial intermembrane space. This chain is Mitochondrial import inner membrane translocase subunit TIM10 (TIM10), found in Debaryomyces hansenii (strain ATCC 36239 / CBS 767 / BCRC 21394 / JCM 1990 / NBRC 0083 / IGC 2968) (Yeast).